The chain runs to 237 residues: Ribonuclease PH (237 aa).

Phosphate contacts are provided by residues arginine 86 and 124–126 (GTR).

This sequence belongs to the RNase PH family. In terms of assembly, homohexameric ring arranged as a trimer of dimers.

It carries out the reaction tRNA(n+1) + phosphate = tRNA(n) + a ribonucleoside 5'-diphosphate. In terms of biological role, phosphorolytic 3'-5' exoribonuclease that plays an important role in tRNA 3'-end maturation. Removes nucleotide residues following the 3'-CCA terminus of tRNAs; can also add nucleotides to the ends of RNA molecules by using nucleoside diphosphates as substrates, but this may not be physiologically important. Probably plays a role in initiation of 16S rRNA degradation (leading to ribosome degradation) during starvation. The chain is Ribonuclease PH from Shewanella loihica (strain ATCC BAA-1088 / PV-4).